Here is a 349-residue protein sequence, read N- to C-terminus: Anthranilate phosphoribosyltransferase (349 aa).

5-phospho-alpha-D-ribose 1-diphosphate is bound by residues Gly84, 87 to 88, Thr92, 94 to 97, 112 to 120, and Ser124; these read GD, NIST, and KHGNRAASS. Gly84 serves as a coordination point for anthranilate. A Mg(2+)-binding site is contributed by Ser96. Position 115 (Asn115) interacts with anthranilate. Arg170 contributes to the anthranilate binding site. Mg(2+)-binding residues include Asp228 and Glu229.

Belongs to the anthranilate phosphoribosyltransferase family. In terms of assembly, homodimer. Requires Mg(2+) as cofactor.

The enzyme catalyses N-(5-phospho-beta-D-ribosyl)anthranilate + diphosphate = 5-phospho-alpha-D-ribose 1-diphosphate + anthranilate. The protein operates within amino-acid biosynthesis; L-tryptophan biosynthesis; L-tryptophan from chorismate: step 2/5. Functionally, catalyzes the transfer of the phosphoribosyl group of 5-phosphorylribose-1-pyrophosphate (PRPP) to anthranilate to yield N-(5'-phosphoribosyl)-anthranilate (PRA). The polypeptide is Anthranilate phosphoribosyltransferase (Leifsonia xyli subsp. xyli (strain CTCB07)).